We begin with the raw amino-acid sequence, 241 residues long: NLP effector protein 7 (241 aa).

The N-terminal stretch at 1–19 is a signal peptide; that stretch reads MHLCALLIAAAGVLASVRA. The short motif at 105-115 is the Conserved undecapeptide motif element; the sequence is AIMYAWYFPKA. Residues 125–131 carry the Conserved heptapeptide motif motif; it reads GSRHYWL. Asparagine 144 carries N-linked (GlcNAc...) asparagine glycosylation.

This sequence belongs to the Necrosis inducing protein (NPP1) family.

The protein localises to the secreted. Its function is as follows. Secreted effector that acts as a pathogen-associated molecular pattern (PAMP) recognized by the plant immune system. Induces necrosis in Nicotiana benthamiana leaves and can induce Phytophthora capsici resistance in Nicotiana benthamiana. Also significantly improves disease resistance of Arabidopsis thaliana to Hyaloperonospora arabidopsidis. causes an inhibition of plant growth which is typically associated with enhanced immunity when over-expressed in Arabidopsis. The polypeptide is NLP effector protein 7 (Plasmopara viticola (Downy mildew of grapevine)).